A 552-amino-acid polypeptide reads, in one-letter code: CTP synthase (552 aa).

The tract at residues 1-270 (MTKYVFVTGG…DRIICEELKL (270 aa)) is amidoligase domain. S13 contributes to the CTP binding site. S13 is a binding site for UTP. ATP is bound by residues 14–19 (SLGKGI) and D71. Mg(2+) contacts are provided by D71 and E144. CTP is bound by residues 151 to 153 (DIE), 191 to 196 (KTKPTQ), and K227. UTP-binding positions include 191–196 (KTKPTQ) and K227. A Glutamine amidotransferase type-1 domain is found at 295 to 547 (TIGMVGKYVD…VEAALANKQA (253 aa)). G356 contacts L-glutamine. C383 (nucleophile; for glutamine hydrolysis) is an active-site residue. Residues 384–387 (LGMQ), E407, and R473 contribute to the L-glutamine site. Active-site residues include H520 and E522.

Belongs to the CTP synthase family. As to quaternary structure, homotetramer.

The enzyme catalyses UTP + L-glutamine + ATP + H2O = CTP + L-glutamate + ADP + phosphate + 2 H(+). It carries out the reaction L-glutamine + H2O = L-glutamate + NH4(+). The catalysed reaction is UTP + NH4(+) + ATP = CTP + ADP + phosphate + 2 H(+). Its pathway is pyrimidine metabolism; CTP biosynthesis via de novo pathway; CTP from UDP: step 2/2. Allosterically activated by GTP, when glutamine is the substrate; GTP has no effect on the reaction when ammonia is the substrate. The allosteric effector GTP functions by stabilizing the protein conformation that binds the tetrahedral intermediate(s) formed during glutamine hydrolysis. Inhibited by the product CTP, via allosteric rather than competitive inhibition. Catalyzes the ATP-dependent amination of UTP to CTP with either L-glutamine or ammonia as the source of nitrogen. Regulates intracellular CTP levels through interactions with the four ribonucleotide triphosphates. This Burkholderia ambifaria (strain MC40-6) protein is CTP synthase.